The following is a 420-amino-acid chain: Glucose-1-phosphate adenylyltransferase (420 aa).

Residues Tyr-107, Gly-172, 187-188 (EK), and Ser-205 each bind alpha-D-glucose 1-phosphate.

Belongs to the bacterial/plant glucose-1-phosphate adenylyltransferase family. In terms of assembly, homotetramer.

It carries out the reaction alpha-D-glucose 1-phosphate + ATP + H(+) = ADP-alpha-D-glucose + diphosphate. It participates in glycan biosynthesis; glycogen biosynthesis. Functionally, involved in the biosynthesis of ADP-glucose, a building block required for the elongation reactions to produce glycogen. Catalyzes the reaction between ATP and alpha-D-glucose 1-phosphate (G1P) to produce pyrophosphate and ADP-Glc. This is Glucose-1-phosphate adenylyltransferase from Rhizobium rhizogenes (strain K84 / ATCC BAA-868) (Agrobacterium radiobacter).